The chain runs to 316 residues: Transaldolase (316 aa).

Residue Lys-126 is the Schiff-base intermediate with substrate of the active site.

The protein belongs to the transaldolase family. Type 1 subfamily. Homodimer.

The protein resides in the cytoplasm. The catalysed reaction is D-sedoheptulose 7-phosphate + D-glyceraldehyde 3-phosphate = D-erythrose 4-phosphate + beta-D-fructose 6-phosphate. It participates in carbohydrate degradation; pentose phosphate pathway; D-glyceraldehyde 3-phosphate and beta-D-fructose 6-phosphate from D-ribose 5-phosphate and D-xylulose 5-phosphate (non-oxidative stage): step 2/3. Transaldolase is important for the balance of metabolites in the pentose-phosphate pathway. This chain is Transaldolase, found in Methylibium petroleiphilum (strain ATCC BAA-1232 / LMG 22953 / PM1).